The sequence spans 285 residues: MATKLQDGNIPCLAATPSEPRPTVLVFDSGVGGLSVYDEIRHLLPDLHYIYAFDNVAFPYGEKSEVFIVERVVEIVTAVQERYPLALAVVACNTASTVSLPALREKFDFPVVGVVPAIKPAARLTANGIVGLLATRGTVKRSYTHELIARFANECQIEMLGSAEMVELAEAKLHGEDVSLDALKRILRPWLRMKEPPDTVVLGCTHFPLLQEELLQVLPEGTRLVDSGAAIARRTAWLLEHEAPDAKSADANIAFCMAMTPEAEQLLPVLQRYGFETLEKLAVLD.

Substrate contacts are provided by residues 28 to 29 (DS) and 60 to 61 (YG). Catalysis depends on Cys92, which acts as the Proton donor/acceptor. Residue 93-94 (NT) coordinates substrate. Cys204 acts as the Proton donor/acceptor in catalysis. 205-206 (TH) lines the substrate pocket.

This sequence belongs to the aspartate/glutamate racemases family.

It catalyses the reaction L-glutamate = D-glutamate. The protein operates within cell wall biogenesis; peptidoglycan biosynthesis. Provides the (R)-glutamate required for cell wall biosynthesis. The chain is Glutamate racemase from Escherichia coli O6:H1 (strain CFT073 / ATCC 700928 / UPEC).